Here is a 348-residue protein sequence, read N- to C-terminus: uncharacterized protein (348 aa).

In terms of biological role, may be involved in apoptosis regulation. This is an uncharacterized protein from Mus musculus (Mouse).